Reading from the N-terminus, the 744-residue chain is MNELLAEMAAVSSRRKQSKPRRMSGEGDAMMSPIDLSTKSFDENNCEKGAGGALPLEDRSNILPHFSVPFANPQQFLSLCAQLGNSSSRNVSSTASTTSSCPIQSCSQSFSSPAALTWHVLDAHEDEQEIFSCDVCTTTFSNGQDIREHKCQKTLASRSTSVPPSTIPSSVCFLSTPTTPCLQFSINESIGTSEIREEDEEEDMDVEDGEHVANQLFGHLLQKSDDKSKMASLFNHAFPPFAAFPNMPPPFLMRQPFDPRADVFAAGRHDNDDDWEALMEISTSDEAEKIRALVGDKAVPTTDPNQCILCRRVLSCKSALQMHYRTHTGERPFKCKICQRAFTTKGNLKTHMGVHRSKHSFRGLPISLPPQLAAMHQHQHQIAPPQRIHIHNPPTSAASAAAAVAQIQASQQCPICQQRFLNAGELAVHITEHRNSLTQPPRVMPTPTTTRVQTFPFVPFFTTPPSLNATDMSTQFNLANILSAQLKNDSSPNTDTSSVEEKITRDDPPKMASLSPSNSSDSSSSVRQDILESSEFEEKLKKLEEPPILEQQVSTTPNPKNENPLLAMQKMWAETEPPPPRQMPVLSKHQCGVCFKHFSSSSALQIHMRTHTGDKPFKCDMCGRAFTTRGNLKVHMGTHSWQQSPSRRGRRIFDVASSVTEKPMLQSPILPTSGAPGASPLAMLGPNGLSGLEMMMMLWRTVCSVCQKVCQSPNELEQHLKEHLNNGSSAAPTPLASAATPPPS.

Positions 6-32 (AEMAAVSSRRKQSKPRRMSGEGDAMMS) are disordered. Over residues 13-22 (SRRKQSKPRR) the composition is skewed to basic residues. 4 consecutive C2H2-type zinc fingers follow at residues 99-124 (SSCP…LDAH), 305-327 (NQCI…YRTH), 333-355 (FKCK…MGVH), and 411-433 (QQCP…ITEH). The span at 487–497 (KNDSSPNTDTS) shows a compositional bias: polar residues. Disordered regions lie at residues 487–530 (KNDS…RQDI) and 542–562 (KLEE…PKNE). Over residues 499-509 (VEEKITRDDPP) the composition is skewed to basic and acidic residues. Positions 513-525 (SLSPSNSSDSSSS) are enriched in low complexity. A compositionally biased stretch (polar residues) spans 551–561 (QQVSTTPNPKN). C2H2-type zinc fingers lie at residues 589–611 (HQCG…MRTH), 617–639 (FKCD…MGTH), and 701–723 (TVCS…LKEH). Residues 725–744 (NNGSSAAPTPLASAATPPPS) are disordered. Positions 728–744 (SSAAPTPLASAATPPPS) are enriched in low complexity.

Belongs to the sal C2H2-type zinc-finger protein family.

It is found in the nucleus. Functionally, transcription factor, involved in positive and negative modulation of transcription. Binds to multiple DNA sequence motifs in the regulatory elements of target genes, including homeobox selector egl-5 and LIM homeobox mec-3. Involved in cell-fate regulation in multiple lineages, including neuronal, mesodermal and vulval. Required to regulate the fate of PLM touch receptor neurons, acting via negative modulation of transcription of egl-5 and mec-3. May modulate gene expression by interacting with different transcription factors during neuronal and mesodermal cell development. Promotes the proliferative sex myoblast (SM) fate, in a cell autonomous manner, acting via the SoxC transcription factor sem-2. Involved in vulval cell-fate determination, acting by regulating expression of homeobox protein lin-39, and may link lin-39 to incoming signaling pathways. Plays a role in detoxification of reactive oxygen species (ROS), by regulating expression of transcription factor skn-1 and the phase II detoxification genes. In Caenorhabditis elegans, this protein is Spalt-like protein sem-4.